Here is a 260-residue protein sequence, read N- to C-terminus: MMWSNFFMQEEDRRRTAVGRRRAQEQQNLGLTPEREGKIKLGLLVAIVGATLAVLAVGTEFWVELNTYKTNGSAVCEAAHLGLWKVCIKRLWQADVPAGRETCGPAELPGEANCTYFKFFTTGENARIFQRTTKKEVNLAAAVIAVLGLTAMALGCLCVIMVLSKGAESLLRLGAVCFGLSGLLLFVSLEVFRHSVGALLQGVNPETPPAPRLAYEYSWSLGCGVGAGLILLLGGVCFLLLTLPSWPWRSLCPKWGGPTA.

The next 4 membrane-spanning stretches (helical) occupy residues 43–63 (LLVA…EFWV), 143–163 (VIAV…IMVL), 169–189 (SLLR…FVSL), and 221–241 (LGCG…FLLL).

It belongs to the PMP-22/EMP/MP20 family. CACNG subfamily. Interacts with CACNA1C. Identified in a complex with the L-type calcium channel subunits CACNA1C, CACNA2D1 and either CACNB1 or CACNB2. In terms of tissue distribution, detected in brain and heart (at protein level).

It localises to the cell membrane. Regulates the activity of L-type calcium channels that contain CACNA1C as pore-forming subunit. The chain is Voltage-dependent calcium channel gamma-6 subunit (Cacng6) from Mus musculus (Mouse).